Consider the following 184-residue polypeptide: Oligoribonuclease (184 aa).

An Exonuclease domain is found at 8–169; sequence LIWIDLEMTG…EDIHESIIEL (162 aa). Y129 is an active-site residue.

This sequence belongs to the oligoribonuclease family.

It localises to the cytoplasm. Its function is as follows. 3'-to-5' exoribonuclease specific for small oligoribonucleotides. The polypeptide is Oligoribonuclease (Buchnera aphidicola subsp. Schizaphis graminum (strain Sg)).